Consider the following 258-residue polypeptide: 5'-nucleotidase SurE (258 aa).

A divalent metal cation-binding residues include Asp9, Asp10, Ser42, and Asn96.

The protein belongs to the SurE nucleotidase family. It depends on a divalent metal cation as a cofactor.

It is found in the cytoplasm. The enzyme catalyses a ribonucleoside 5'-phosphate + H2O = a ribonucleoside + phosphate. Functionally, nucleotidase that shows phosphatase activity on nucleoside 5'-monophosphates. In Campylobacter jejuni subsp. jejuni serotype O:2 (strain ATCC 700819 / NCTC 11168), this protein is 5'-nucleotidase SurE.